A 178-amino-acid polypeptide reads, in one-letter code: Fatty-acid and retinol-binding protein 1 (178 aa).

Positions Met1 to Ala16 are cleaved as a signal peptide. 2 coiled-coil regions span residues Asp67–Asn89 and Lys130–Val153.

It belongs to the fatty-acid and retinol-binding protein (FARBP) family. Not glycosylated.

It is found in the secreted. Its function is as follows. Binds retinol and different fatty acids. The chain is Fatty-acid and retinol-binding protein 1 from Wuchereria bancrofti.